The sequence spans 351 residues: Uroporphyrinogen decarboxylase (351 aa).

Substrate is bound by residues 25 to 29 (RQAGR), aspartate 74, tyrosine 151, serine 206, and histidine 325.

This sequence belongs to the uroporphyrinogen decarboxylase family. As to quaternary structure, homodimer.

It localises to the cytoplasm. The catalysed reaction is uroporphyrinogen III + 4 H(+) = coproporphyrinogen III + 4 CO2. The protein operates within porphyrin-containing compound metabolism; protoporphyrin-IX biosynthesis; coproporphyrinogen-III from 5-aminolevulinate: step 4/4. Functionally, catalyzes the decarboxylation of four acetate groups of uroporphyrinogen-III to yield coproporphyrinogen-III. The polypeptide is Uroporphyrinogen decarboxylase (Pelodictyon phaeoclathratiforme (strain DSM 5477 / BU-1)).